The following is a 335-amino-acid chain: Legumin type B (335 aa).

2 disordered regions span residues 47–87 (PETQ…GNSV) and 102–155 (TEED…GRNG). The segment covering 105-118 (DTAKRLRSPRDKRN) has biased composition (basic and acidic residues). Over residues 135 to 144 (QQEEEEEEEE) the composition is skewed to acidic residues. The Cupin type-1 domain occupies 167–314 (ENIAQPARAD…AFGLRQRQVT (148 aa)).

Belongs to the 11S seed storage protein (globulins) family. Hexamer; each subunit is composed of an acidic and a basic chain derived from a single precursor and linked by a disulfide bond.

Functionally, this protein found in the seeds of many leguminous and non-leguminous plants is the source of sulfur-containing amino acids in seed meals. In Vicia faba (Broad bean), this protein is Legumin type B (LEB2).